The sequence spans 197 residues: Transmembrane protein 126A (197 aa).

Residues 1–35 (MENHEPDGTIIKENLTDIIARKINQLPEAERNLLE) lie on the Mitochondrial matrix side of the membrane. The chain crosses the membrane as a helical span at residues 36–56 (NGSTYVGLNAALCGLIANSLF). Topologically, residues 57–58 (RR) are mitochondrial intermembrane. A helical transmembrane segment spans residues 59–79 (ILHVTQARIAAGLPMAVIPFL). The Mitochondrial matrix portion of the chain corresponds to 80 to 107 (TANVSYKGFVSLPLNTGDLQCETCTVTR). A helical transmembrane segment spans residues 108–128 (GGLVGLVFGGLYPVFLAIPVN). Topologically, residues 129–160 (GGLAARYNSALLPEKGNILNYWIRISKPVFRK) are mitochondrial intermembrane. The helical transmembrane segment at 161-177 (MLFPILLQTGFAAYLGS) threads the bilayer. The Mitochondrial matrix segment spans residues 178–197 (RQYKLLIKALQLPEPGLEIE).

It belongs to the TMEM126 family. In terms of assembly, interacts with OXA1L; promoting cotranslational quality control in mitochondria.

It is found in the mitochondrion inner membrane. Its function is as follows. Protein required for the cotranslational protein quality control in the inner membrane of the mitochondria. Associates with newly synthesized polypeptides and may act as a chaperone that cooperates with OXA1L for the insertion of newly synthesized mitochondrial proteins into the inner membrane. Required for the assembly of the ND4 module of mitochondrial complex I. The sequence is that of Transmembrane protein 126A (TMEM126A) from Bos taurus (Bovine).